A 370-amino-acid polypeptide reads, in one-letter code: Anhydro-N-acetylmuramic acid kinase (370 aa).

Residue 13–20 (GTSMDGID) coordinates ATP.

It belongs to the anhydro-N-acetylmuramic acid kinase family.

It carries out the reaction 1,6-anhydro-N-acetyl-beta-muramate + ATP + H2O = N-acetyl-D-muramate 6-phosphate + ADP + H(+). It participates in amino-sugar metabolism; 1,6-anhydro-N-acetylmuramate degradation. Its pathway is cell wall biogenesis; peptidoglycan recycling. Catalyzes the specific phosphorylation of 1,6-anhydro-N-acetylmuramic acid (anhMurNAc) with the simultaneous cleavage of the 1,6-anhydro ring, generating MurNAc-6-P. Is required for the utilization of anhMurNAc either imported from the medium or derived from its own cell wall murein, and thus plays a role in cell wall recycling. This chain is Anhydro-N-acetylmuramic acid kinase, found in Rhizobium etli (strain ATCC 51251 / DSM 11541 / JCM 21823 / NBRC 15573 / CFN 42).